We begin with the raw amino-acid sequence, 298 residues long: Mimecan (298 aa).

The first 20 residues, 1 to 20 (MKTLQSTLLLLLFVPLIKPA), serve as a signal peptide directing secretion. Residue Asn88 is glycosylated (N-linked (GlcNAc...) (keratan sulfate) asparagine). LRR repeat units lie at residues 112–131 (DAVPPLPKESAYLYARFNKI), 132–155 (KKLTAKDFADIPNLRRLDFTGNLI), 156–179 (EDIEDGTFSKLSLLEELSLAENQL), 180–199 (LKLPVLPPKLTLFNAKYNKI), 200–225 (KSRGIKANAFKKLNNLTFLYLDHNAL), 226–246 (ESVPLNLPESLRVIHLQFNNI), and 247–277 (ASITDDTFCKANDTSYIRDRIEEIRLEGNPI). The N-linked (GlcNAc...) (keratan sulfate) asparagine glycan is linked to Asn214. A disulfide bond links Cys255 and Cys288. An N-linked (GlcNAc...) (keratan sulfate) asparagine glycan is attached at Asn258.

It belongs to the small leucine-rich proteoglycan (SLRP) family. SLRP class III subfamily. In terms of processing, contains keratan sulfate.

The protein localises to the secreted. Its subcellular location is the extracellular space. The protein resides in the extracellular matrix. In terms of biological role, induces bone formation in conjunction with TGF-beta-1 or TGF-beta-2. The sequence is that of Mimecan (OGN) from Pongo abelii (Sumatran orangutan).